We begin with the raw amino-acid sequence, 313 residues long: MESIFFMIGFENQYQIGLVESSYDDNPDDYLTTNGLYFTNAKYISDYFNQGTTLFEIKLPIDDNEFKYIRTGDRWRANRLNLVKSYSLFDSETYNKFGLNITDNKYIMDFASSLGKIDFLDKTRSLKLLYTNKSLDEASINGHISVLNWWKHSGLKLKYTELSIDGASGRGHIDVLNWWLNLAIYSKIKFKYTQQAINSASKNGKTDSLEWWKRTRLPLIYTTEAIDAASMKRKINSLDWWLKSGLQIEYTVSSMDHASWNNHTDVLDWWLKSGLELKYSKNCNNWIDRFGRTDILDWWEKSGLKIKFKHEIY.

This is an uncharacterized protein from Acanthamoeba polyphaga mimivirus (APMV).